The primary structure comprises 323 residues: Mediator of RNA polymerase II transcription subunit 4 (323 aa).

Residues 1-36 (MLPFKKADSPFKSNPVSRVGSSTRLNQLGNIKSNPT) are disordered. Residues 11–36 (FKSNPVSRVGSSTRLNQLGNIKSNPT) show a composition bias toward polar residues. The stretch at 79-167 (MVQKVNEYER…VSYRNELKKL (89 aa)) forms a coiled coil. Composition is skewed to basic and acidic residues over residues 241 to 262 (HELG…KVDH) and 282 to 303 (DEQR…KEEQ). A disordered region spans residues 241 to 323 (HELGETDKEN…LFDPDDEYSD (83 aa)).

It belongs to the Mediator complex subunit 4 family. In terms of assembly, component of the Mediator complex.

It localises to the nucleus. In terms of biological role, component of the Mediator complex, a coactivator involved in the regulated transcription of nearly all RNA polymerase II-dependent genes. Mediator functions as a bridge to convey information from gene-specific regulatory proteins to the basal RNA polymerase II transcription machinery. Mediator is recruited to promoters by direct interactions with regulatory proteins and serves as a scaffold for the assembly of a functional preinitiation complex with RNA polymerase II and the general transcription factors. This chain is Mediator of RNA polymerase II transcription subunit 4 (MED4), found in Candida albicans (strain SC5314 / ATCC MYA-2876) (Yeast).